Reading from the N-terminus, the 276-residue chain is Undecaprenyl-diphosphatase (276 aa).

6 consecutive transmembrane segments (helical) span residues arginine 43–phenylalanine 63, leucine 85–isoleucine 105, leucine 109–alanine 129, alanine 183–serine 203, valine 218–leucine 238, and isoleucine 254–alanine 274.

Belongs to the UppP family.

It localises to the cell inner membrane. It carries out the reaction di-trans,octa-cis-undecaprenyl diphosphate + H2O = di-trans,octa-cis-undecaprenyl phosphate + phosphate + H(+). Its function is as follows. Catalyzes the dephosphorylation of undecaprenyl diphosphate (UPP). Confers resistance to bacitracin. This Pseudomonas syringae pv. syringae (strain B728a) protein is Undecaprenyl-diphosphatase.